The chain runs to 270 residues: Lipopolysaccharide core biosynthesis glycosyltransferase LpsC (270 aa).

Belongs to the glycosyltransferase 2 family. WaaE/KdtX subfamily.

It functions in the pathway bacterial outer membrane biogenesis; LPS core biosynthesis. In Rhizobium meliloti (strain 1021) (Ensifer meliloti), this protein is Lipopolysaccharide core biosynthesis glycosyltransferase LpsC (lpsC).